Reading from the N-terminus, the 321-residue chain is Olfactory receptor 52N4 (321 aa).

The Extracellular segment spans residues 1–27; sequence MLTLNKTDLIPASFILNGVPGLEDTQL. N-linked (GlcNAc...) asparagine glycosylation occurs at Asn-5. A helical transmembrane segment spans residues 28 to 48; that stretch reads WISFPFCSMYVVAMVGNCGLL. At 49–56 the chain is on the cytoplasmic side; that stretch reads YLIHYEDA. Residues 57–77 form a helical membrane-spanning segment; sequence LHKPMYYFLAMLSFTDLVMCS. Over 78 to 101 the chain is Extracellular; the sequence is STIPKALCIFWFHLKDIGFDECLV. Cys-99 and Cys-191 form a disulfide bridge. The chain crosses the membrane as a helical span at residues 102-122; it reads QMFFTHTFTGMESGVLMLMAL. Topologically, residues 123-141 are cytoplasmic; sequence DRYVAICYPLRYSTILTNP. The chain crosses the membrane as a helical span at residues 142–162; sequence VIAKVGTATFLRGVLLIIPFT. Residues 163–198 are Extracellular-facing; it reads FLTKLLPYCRGNILPHTYCDHMSVAKLSCGNVKVNA. The helical transmembrane segment at 199 to 219 threads the bilayer; that stretch reads IYGLMVALLIWGFDILCITNS. The Cytoplasmic segment spans residues 220 to 239; that stretch reads YTMILRAVVSLSSADARQKA. The chain crosses the membrane as a helical span at residues 240–260; sequence FNTCTAHICAIVFSYTPAFFS. Over 261 to 276 the chain is Extracellular; that stretch reads FFSHRFGEHIIPPSCH. Residues 277–297 form a helical membrane-spanning segment; that stretch reads IIVANIYLLLPPTMNPIVYGV. Residues 298-321 lie on the Cytoplasmic side of the membrane; it reads KTKQIRDCVIRILSGSKDTKSYSM.

The protein belongs to the G-protein coupled receptor 1 family.

Its subcellular location is the cell membrane. Its function is as follows. Odorant receptor. In Homo sapiens (Human), this protein is Olfactory receptor 52N4 (OR52N4).